The sequence spans 263 residues: MARGPKKHLKRVAAPKHWMLDKLTGVFAPRPSTGPHKLRECLPLIVFLRNRLKYALTGDEVKKICMQRFIKIDGKVRVDVTYPAGFMDVISIEKTGEHFRLVYDTKGRFAVHRITVEEAKYKLCKVRKITVGVKGIPHLVTHDARTIRYPDPVIKVNDTVQIDLGTGKIINFIKFDTGNLCMVIGGANLGRVGVITNRERHPGSFDVVHVKDANGNSFATRLSNIFVIGNGNKPWISLPRGKGIRLTVAAERDKRLATKQSSG.

The S4 RNA-binding domain maps to 42-104 (LPLIVFLRNR…TGEHFRLVYD (63 aa)).

It belongs to the eukaryotic ribosomal protein eS4 family.

The protein is Small ribosomal subunit protein eS4 (RPS4Y1) of Pan paniscus (Pygmy chimpanzee).